The chain runs to 282 residues: Trihydroxynaphthalene reductase (282 aa).

Ile41, Asn114, and Arg147 together coordinate NADP(+). Residues Ser164 and Tyr178 each act as proton donor in the active site. Tyr178, Lys182, Ile211, and Thr213 together coordinate NADP(+). The active-site Lowers pKa of active site Tyr is Lys182.

The protein belongs to the short-chain dehydrogenases/reductases (SDR) family. As to quaternary structure, homotetramer.

It functions in the pathway pigment biosynthesis; melanin biosynthesis. Catalyzes the NADPH-dependent reduction of 1,3,8-trihydroxynaphthalene (T3HN) into (-)-vermelone. Essential for appressorial penetration of colletotrichum lagenarium. In Colletotrichum orbiculare (strain 104-T / ATCC 96160 / CBS 514.97 / LARS 414 / MAFF 240422) (Cucumber anthracnose fungus), this protein is Trihydroxynaphthalene reductase (THR1).